The primary structure comprises 190 residues: GTP cyclohydrolase 1 (190 aa).

Zn(2+) is bound by residues cysteine 75, histidine 78, and cysteine 146.

It belongs to the GTP cyclohydrolase I family. Homomer.

The catalysed reaction is GTP + H2O = 7,8-dihydroneopterin 3'-triphosphate + formate + H(+). The protein operates within cofactor biosynthesis; 7,8-dihydroneopterin triphosphate biosynthesis; 7,8-dihydroneopterin triphosphate from GTP: step 1/1. The chain is GTP cyclohydrolase 1 from Campylobacter concisus (strain 13826).